The chain runs to 269 residues: Putative pyruvate, phosphate dikinase regulatory protein (269 aa).

Residue 151 to 158 (GISRTSKT) coordinates ADP.

The protein belongs to the pyruvate, phosphate/water dikinase regulatory protein family. PDRP subfamily.

It catalyses the reaction N(tele)-phospho-L-histidyl/L-threonyl-[pyruvate, phosphate dikinase] + ADP = N(tele)-phospho-L-histidyl/O-phospho-L-threonyl-[pyruvate, phosphate dikinase] + AMP + H(+). The enzyme catalyses N(tele)-phospho-L-histidyl/O-phospho-L-threonyl-[pyruvate, phosphate dikinase] + phosphate + H(+) = N(tele)-phospho-L-histidyl/L-threonyl-[pyruvate, phosphate dikinase] + diphosphate. Its function is as follows. Bifunctional serine/threonine kinase and phosphorylase involved in the regulation of the pyruvate, phosphate dikinase (PPDK) by catalyzing its phosphorylation/dephosphorylation. The protein is Putative pyruvate, phosphate dikinase regulatory protein of Staphylococcus aureus.